We begin with the raw amino-acid sequence, 572 residues long: Proline--tRNA ligase (572 aa).

It belongs to the class-II aminoacyl-tRNA synthetase family. ProS type 1 subfamily. As to quaternary structure, homodimer.

Its subcellular location is the cytoplasm. It carries out the reaction tRNA(Pro) + L-proline + ATP = L-prolyl-tRNA(Pro) + AMP + diphosphate. Catalyzes the attachment of proline to tRNA(Pro) in a two-step reaction: proline is first activated by ATP to form Pro-AMP and then transferred to the acceptor end of tRNA(Pro). As ProRS can inadvertently accommodate and process non-cognate amino acids such as alanine and cysteine, to avoid such errors it has two additional distinct editing activities against alanine. One activity is designated as 'pretransfer' editing and involves the tRNA(Pro)-independent hydrolysis of activated Ala-AMP. The other activity is designated 'posttransfer' editing and involves deacylation of mischarged Ala-tRNA(Pro). The misacylated Cys-tRNA(Pro) is not edited by ProRS. The polypeptide is Proline--tRNA ligase (Escherichia coli O127:H6 (strain E2348/69 / EPEC)).